The chain runs to 559 residues: N-acetylglucosamine-6-sulfatase (559 aa).

The interval 1–26 (MRFLSLAPDRPRRGGPRHLPSGSPAP) is disordered. An N-terminal signal peptide occupies residues 1 to 47 (MRFLSLAPDRPRRGGPRHLPSGSPAPPPPPPLLLLLLLGGCLGVSGA). D62, D63, and C98 together coordinate Ca(2+). C98 acts as the Nucleophile in catalysis. The residue at position 98 (C98) is a 3-oxoalanine (Cys). 7 N-linked (GlcNAc...) asparagine glycosylation sites follow: N118, N124, N190, N205, N217, N286, and N324. Residues D333 and N334 each coordinate Ca(2+). N-linked (GlcNAc...) asparagine glycosylation is found at N369, N394, N412, N429, N456, and N487. S548 bears the Phosphoserine mark.

This sequence belongs to the sulfatase family. The cofactor is Ca(2+). Post-translationally, processed by internal peptidase. In terms of processing, the conversion to 3-oxoalanine (also known as C-formylglycine, FGly), of a serine or cysteine residue in prokaryotes and of a cysteine residue in eukaryotes, is critical for catalytic activity.

The protein resides in the lysosome. The catalysed reaction is Hydrolysis of the 6-sulfate groups of the N-acetyl-D-glucosamine 6-sulfate units of heparan sulfate and keratan sulfate.. Its function is as follows. Hydrolyzes 6-sulfate groups in N-acetyl-d-glucosaminide units of heparin sulfate and keratan sulfate. The chain is N-acetylglucosamine-6-sulfatase (GNS) from Capra hircus (Goat).